The primary structure comprises 453 residues: Ribosomal protein uS12 methylthiotransferase RimO (453 aa).

The region spanning Pro-5 to Pro-120 is the MTTase N-terminal domain. The [4Fe-4S] cluster site is built by Cys-14, Cys-50, Cys-79, Cys-151, Cys-155, and Cys-158. In terms of domain architecture, Radical SAM core spans Leu-137–Asn-382. Positions Gln-385–Val-453 constitute a TRAM domain.

It belongs to the methylthiotransferase family. RimO subfamily. [4Fe-4S] cluster is required as a cofactor.

It localises to the cytoplasm. The catalysed reaction is L-aspartate(89)-[ribosomal protein uS12]-hydrogen + (sulfur carrier)-SH + AH2 + 2 S-adenosyl-L-methionine = 3-methylsulfanyl-L-aspartate(89)-[ribosomal protein uS12]-hydrogen + (sulfur carrier)-H + 5'-deoxyadenosine + L-methionine + A + S-adenosyl-L-homocysteine + 2 H(+). Its function is as follows. Catalyzes the methylthiolation of an aspartic acid residue of ribosomal protein uS12. The protein is Ribosomal protein uS12 methylthiotransferase RimO of Burkholderia lata (strain ATCC 17760 / DSM 23089 / LMG 22485 / NCIMB 9086 / R18194 / 383).